The primary structure comprises 327 residues: Phenylalanine--tRNA ligase alpha subunit (327 aa).

A Mg(2+)-binding site is contributed by glutamate 252.

Belongs to the class-II aminoacyl-tRNA synthetase family. Phe-tRNA synthetase alpha subunit type 1 subfamily. As to quaternary structure, tetramer of two alpha and two beta subunits. Mg(2+) is required as a cofactor.

It is found in the cytoplasm. It carries out the reaction tRNA(Phe) + L-phenylalanine + ATP = L-phenylalanyl-tRNA(Phe) + AMP + diphosphate + H(+). The polypeptide is Phenylalanine--tRNA ligase alpha subunit (Shewanella baltica (strain OS185)).